The chain runs to 511 residues: Limonoid UDP-glucosyltransferase (511 aa).

The Proton acceptor role is filled by histidine 19. Histidine 19 serves as a coordination point for an anthocyanidin. Residues glutamine 344, histidine 359, tryptophan 362, asparagine 363, serine 364, and glutamate 367 each contribute to the UDP-alpha-D-glucose site. Glycine 382 provides a ligand contact to an anthocyanidin. UDP-alpha-D-glucose is bound by residues aspartate 383 and glutamine 384.

The protein belongs to the UDP-glycosyltransferase family.

It carries out the reaction limonin + UDP-alpha-D-glucose + H2O = limonin 17-beta-D-glucoside + UDP + 2 H(+). Its function is as follows. Involved in the glucosylation of limonoids. This chain is Limonoid UDP-glucosyltransferase, found in Citrus unshiu (Satsuma mandarin).